The chain runs to 237 residues: DNA repair protein RecO (237 aa).

This sequence belongs to the RecO family.

Its function is as follows. Involved in DNA repair and RecF pathway recombination. The protein is DNA repair protein RecO of Rickettsia felis (strain ATCC VR-1525 / URRWXCal2) (Rickettsia azadi).